The sequence spans 84 residues: Large ribosomal subunit protein bL27 (84 aa).

The segment at 1-25 (MAHKKGAGSTKNGRDSKPKMLGVKR) is disordered.

This sequence belongs to the bacterial ribosomal protein bL27 family.

In Dehalococcoides mccartyi (strain ATCC BAA-2266 / KCTC 15142 / 195) (Dehalococcoides ethenogenes (strain 195)), this protein is Large ribosomal subunit protein bL27.